The chain runs to 295 residues: Malonyl-[acyl-carrier protein] O-methyltransferase (295 aa).

The protein belongs to the methyltransferase superfamily.

It carries out the reaction malonyl-[ACP] + S-adenosyl-L-methionine = malonyl-[ACP] methyl ester + S-adenosyl-L-homocysteine. It participates in cofactor biosynthesis; biotin biosynthesis. Its function is as follows. Converts the free carboxyl group of a malonyl-thioester to its methyl ester by transfer of a methyl group from S-adenosyl-L-methionine (SAM). It allows to synthesize pimeloyl-ACP via the fatty acid synthetic pathway. This chain is Malonyl-[acyl-carrier protein] O-methyltransferase, found in Halorhodospira halophila (strain DSM 244 / SL1) (Ectothiorhodospira halophila (strain DSM 244 / SL1)).